The chain runs to 4568 residues: Dynein heavy chain, cytoplasmic (4568 aa).

A stem region spans residues 1–1826 (MDSGNESSII…VVKMANSQFF (1826 aa)). Coiled-coil stretches lie at residues 587–652 (QTRL…VLGK), 814–844 (KLAETVNTYQERCEELLNVVRIVNADLNVLK), 1241–1274 (QEALNVITAFEAKLNKLTEERNKMRKARVALDLS), 1324–1340 (RKIRQSLDELMNQLKQL), and 1559–1591 (VNMQGAQRLLERLADMLAKIQKALGEYLERERS). AAA regions lie at residues 1827 to 2049 (YGFE…VLVS), 2118 to 2394 (QQLS…PTPQ), 2498 to 2747 (EIES…WVRG), and 2842 to 3111 (GFYE…GHRV). Residues 1865-1872 (GPAGTGKT), 2163-2170 (GSSGSGKT), 2537-2544 (GPPGSGKT), and 2880-2887 (GTAGAGKT) contribute to the ATP site. Coiled-coil stretches lie at residues 3132–3229 (EKRS…AQVE), 3339–3432 (ARAQ…RDRW), and 3707–3739 (NSVIETLEKLKNEAAEVAQKSAETDKVMAEVDA). The interval 3132 to 3432 (EKRSDLEEEK…SSLRSERDRW (301 aa)) is stalk. AAA stretches follow at residues 3496 to 3725 (LSTV…EVAQ) and 3954 to 4169 (AHRV…TLDA). A coiled-coil region spans residues 4359–4386 (QLLKDIRRDLNEISAVCRAEKKQNNETR).

Belongs to the dynein heavy chain family. As to quaternary structure, consists of at least two heavy chains and a number of intermediate and light chains.

The protein localises to the cytoplasm. It localises to the cytoskeleton. In terms of biological role, cytoplasmic dynein acts as a motor for the intracellular retrograde motility of vesicles and organelles along microtubules. Dynein has ATPase activity; the force-producing power stroke is thought to occur on release of ADP. May play a role in nuclear migration in hypodermal precursor cells. May be involved in the transport of synaptic vesicle components towards the axon of the DA motor neuron. This function may involve the regulation of dynein by pct-1 and/or cdk-5. Involved in the formation of synapses in the dorsal region during synaptic remodeling of DD motor neurons. Required for anterograde trafficking of dense-core vesicles in the DB motor neuron dendrites. Required for the formation of dendritic branches of PVD sensory neurons. May also play a role in GABAergic synaptic vesicle localization in the ventral nerve cord. May play a role in the pairing of homologous chromosomes during meiosis. The polypeptide is Dynein heavy chain, cytoplasmic (Caenorhabditis elegans).